The chain runs to 727 residues: Putative ATP-dependent RNA helicase DHX15 (727 aa).

Residues methionine 1–asparagine 41 are disordered. Over residues threonine 31 to asparagine 41 the composition is skewed to low complexity. The region spanning isoleucine 87 to proline 251 is the Helicase ATP-binding domain. Residue glycine 100–threonine 107 participates in ATP binding. The DEAH box signature appears at aspartate 198–histidine 201. Residues alanine 273–glycine 445 enclose the Helicase C-terminal domain.

This sequence belongs to the DEAD box helicase family. DEAH subfamily. DDX15/PRP43 sub-subfamily.

It localises to the nucleus. The catalysed reaction is ATP + H2O = ADP + phosphate + H(+). Functionally, pre-mRNA processing factor involved in disassembly of spliceosomes after the release of mature mRNA. This Dictyostelium discoideum (Social amoeba) protein is Putative ATP-dependent RNA helicase DHX15 (dhx15).